We begin with the raw amino-acid sequence, 88 residues long: Small ribosomal subunit protein uS15 (88 aa).

Positions 1–12 (MLTNTDRQQVIA) are enriched in polar residues. The disordered stretch occupies residues 1–23 (MLTNTDRQQVIAQYQRAPGDTGS).

The protein belongs to the universal ribosomal protein uS15 family. Part of the 30S ribosomal subunit. Forms a bridge to the 50S subunit in the 70S ribosome, contacting the 23S rRNA.

In terms of biological role, one of the primary rRNA binding proteins, it binds directly to 16S rRNA where it helps nucleate assembly of the platform of the 30S subunit by binding and bridging several RNA helices of the 16S rRNA. Forms an intersubunit bridge (bridge B4) with the 23S rRNA of the 50S subunit in the ribosome. The sequence is that of Small ribosomal subunit protein uS15 from Psychrobacter sp. (strain PRwf-1).